The sequence spans 303 residues: MQERQYVGRFAPSPSGSLHFGSLIAALGSYLQARAQRGQWLVRIEDIDPPREVAGAADRILSALEHYGLLWDGQVIYQSQRHEAYRATLDLLHQQGLSYCCNCTRSRIQQLGGLYDGHCRHLNLGPQGAAIRLRQSTPVYAFHDRLQGELQADPALAREDFIIRRRDGLFAYNLAVVVDDHFQGVTEIVRGADLIEPTVRQIALYHQLQAPVPTYVHLPLALGANGSKLSKQNHAPALPDGDPRPTLVAALKFLRQPLPESWQDLDLSLLLSWAVAHWKLEDVPRREAISLDENTSAFSKEPW.

L-glutamate is bound by residues 9 to 13 (RFAPS) and E45. Positions 12 to 22 (PSPSGSLHFGS) match the 'HIGH' region motif. Zn(2+) is bound by residues C101, C103, Y115, and C119. Residues Y172 and R190 each coordinate L-glutamate. The short motif at 228–232 (KLSKQ) is the 'KMSKS' region element. K231 contributes to the ATP binding site.

The protein belongs to the class-I aminoacyl-tRNA synthetase family. GluQ subfamily. Zn(2+) serves as cofactor.

Its function is as follows. Catalyzes the tRNA-independent activation of glutamate in presence of ATP and the subsequent transfer of glutamate onto a tRNA(Asp). Glutamate is transferred on the 2-amino-5-(4,5-dihydroxy-2-cyclopenten-1-yl) moiety of the queuosine in the wobble position of the QUC anticodon. The protein is Glutamyl-Q tRNA(Asp) synthetase of Serratia proteamaculans (strain 568).